Reading from the N-terminus, the 411-residue chain is Glutamate dehydrogenase (411 aa).

Residue lysine 102 is part of the active site.

It belongs to the Glu/Leu/Phe/Val dehydrogenases family.

It carries out the reaction L-glutamate + NAD(+) + H2O = 2-oxoglutarate + NH4(+) + NADH + H(+). The catalysed reaction is L-glutamate + NADP(+) + H2O = 2-oxoglutarate + NH4(+) + NADPH + H(+). In Zea mays (Maize), this protein is Glutamate dehydrogenase (GDH1).